The sequence spans 429 residues: Protein ABERRANT PANICLE ORGANIZATION 1 (429 aa).

A compositionally biased stretch (pro residues) spans 1-11 (MMNPRRLPPLP). Residues 1 to 21 (MMNPRRLPPLPSSTSSASAAD) are disordered. The F-box domain maps to 25–71 (PRVWRRLPQPLVDRILACLPTPSFLRLRAACRRFYHLLFSSPFLHSH). 2 helical membrane passes run 72-92 (LLLSPHLPFFAFVVPAAGHLL) and 112-132 (VAGGPAAFSPAAASAGLLAFL). Kelch repeat units lie at residues 229 to 277 (MAFA…ELGG), 284 to 339 (RVAL…AEGG), and 350 to 397 (YVVL…GAAG).

As to quaternary structure, part of a putative SCF (ASK/Cullin/F-box) ubiquitin ligase complex. Interacts with FL/APO2. In terms of tissue distribution, expressed in apical meristems and the lateral organ primordia throughout development. Expressed in seedlings, roots, leaves, shoot apical meristem (SAM), developing panicles, and, at lower levels, in developing seeds.

It is found in the membrane. The protein operates within protein modification; protein ubiquitination. Its function is as follows. Component of SCF(ASK-cullin-F-box) E3 ubiquitin ligase complexes, which may mediate the ubiquitination and subsequent proteasomal degradation of target proteins. Together with FL/APO2, involved in the temporal regulation of meristem identity during both vegetative and reproductive developments in an APO2-dependent manner. Promotes spikelet formation by suppressing the precocious conversion of inflorescence meristems to spikelet meristems, probably via a positive regulation of class-C floral homeotic genes, but not of class-B genes, and through the control of cell proliferation in meristems. Mediates culm development and strength/diameter enhancement at internodes. Required for the regulation of the plastochron, floral organ identity, and floral determinacy. Controls the number of primary rachis branches (PRBs). May trigger the formation of vascular bundle systems which, consequently, promote carbohydrate translocation to panicles. Involved in ozone-induced grain yield regulation. This Oryza sativa subsp. japonica (Rice) protein is Protein ABERRANT PANICLE ORGANIZATION 1.